The following is a 520-amino-acid chain: L-tyrosine:2-oxoglutarate aminotransferase amt1 (520 aa).

The protein belongs to the class-I pyridoxal-phosphate-dependent aminotransferase family. Pyridoxal 5'-phosphate serves as cofactor.

It catalyses the reaction L-tyrosine + 2-oxoglutarate = 3-(4-hydroxyphenyl)pyruvate + L-glutamate. It functions in the pathway secondary metabolite biosynthesis. In terms of biological role, an L-tyrosine:2-oxoglutarate aminotransferase (probably amt1) and atromentin synthetase nps3 catalyze consecutive steps to turn over L-tyrosine into atromentin, which represents the generic precursor molecule for the entire terphenylquinone and pulvinic acid family of pigments, which are widely distributed secondary metabolites in homobasidiomycetes. The first step catalyzed by amt1 converts L-tyrosine in to 4-hydroxyphenylpyruvate (4-HPP). Adenylation of two 4-HPP monomers by the nps3 adenylation (A) domain, covalent tethering of the monomers as a thioester and oxoester onto the nps3 thiolation (T) and thioesterase (TE) domains, respectively, and symmetric C-C-bond formation between two monomers catalyzed by the nps3 TE domain leads to atromentin. Follow-up products of atromentin in S.lacrymans include atromentic acid, xerocomic acid, isoxerocomic acid and variegatic acid. This Serpula lacrymans var. lacrymans (strain S7.9) (Dry rot fungus) protein is L-tyrosine:2-oxoglutarate aminotransferase amt1 (amt1).